A 148-amino-acid chain; its full sequence is Large ribosomal subunit protein bL9 (148 aa).

This sequence belongs to the bacterial ribosomal protein bL9 family.

Functionally, binds to the 23S rRNA. The protein is Large ribosomal subunit protein bL9 of Pseudomonas syringae pv. tomato (strain ATCC BAA-871 / DC3000).